The primary structure comprises 44 residues: Cuticle protein CP459 (44 aa).

Tandem repeats lie at residues 3–20 (LLKG…KRLL) and 27–44 (VLLT…NVQF).

In terms of tissue distribution, calcified shell.

In Cancer pagurus (Rock crab), this protein is Cuticle protein CP459.